The primary structure comprises 260 residues: Resolvase (260 aa).

Positions Glu38–Arg241 constitute a Tyr recombinase domain. Active-site residues include Arg73, Lys105, His193, Arg196, and His219. Tyr228 serves as the catalytic O-(3'-phospho-DNA)-tyrosine intermediate.

The protein belongs to the 'phage' integrase family.

Its function is as follows. This resolvase acts at the RfsF equivalent resolution sequence of pColBM-CL139. This Escherichia coli protein is Resolvase (resD).